Consider the following 256-residue polypeptide: Thiazole synthase (256 aa).

Lys95 acts as the Schiff-base intermediate with DXP in catalysis. Residues Gly156, 182 to 183, and 204 to 205 each bind 1-deoxy-D-xylulose 5-phosphate; these read AG and NT.

The protein belongs to the ThiG family. Homotetramer. Forms heterodimers with either ThiH or ThiS.

It localises to the cytoplasm. The catalysed reaction is [ThiS sulfur-carrier protein]-C-terminal-Gly-aminoethanethioate + 2-iminoacetate + 1-deoxy-D-xylulose 5-phosphate = [ThiS sulfur-carrier protein]-C-terminal Gly-Gly + 2-[(2R,5Z)-2-carboxy-4-methylthiazol-5(2H)-ylidene]ethyl phosphate + 2 H2O + H(+). It participates in cofactor biosynthesis; thiamine diphosphate biosynthesis. Catalyzes the rearrangement of 1-deoxy-D-xylulose 5-phosphate (DXP) to produce the thiazole phosphate moiety of thiamine. Sulfur is provided by the thiocarboxylate moiety of the carrier protein ThiS. In vitro, sulfur can be provided by H(2)S. The protein is Thiazole synthase of Salmonella enteritidis PT4 (strain P125109).